The following is a 348-amino-acid chain: Tetraacyldisaccharide 4'-kinase (348 aa).

65-72 serves as a coordination point for ATP; it reads VAGGAGKT. The segment at 89 to 117 is disordered; that stretch reads PGIVSRGHGSREREARPVSADSTAQSVGD.

This sequence belongs to the LpxK family.

It carries out the reaction a lipid A disaccharide + ATP = a lipid IVA + ADP + H(+). The protein operates within glycolipid biosynthesis; lipid IV(A) biosynthesis; lipid IV(A) from (3R)-3-hydroxytetradecanoyl-[acyl-carrier-protein] and UDP-N-acetyl-alpha-D-glucosamine: step 6/6. In terms of biological role, transfers the gamma-phosphate of ATP to the 4'-position of a tetraacyldisaccharide 1-phosphate intermediate (termed DS-1-P) to form tetraacyldisaccharide 1,4'-bis-phosphate (lipid IVA). The polypeptide is Tetraacyldisaccharide 4'-kinase (Leptothrix cholodnii (strain ATCC 51168 / LMG 8142 / SP-6) (Leptothrix discophora (strain SP-6))).